The primary structure comprises 249 residues: tRNA pseudouridine synthase A (249 aa).

The active-site Nucleophile is Asp-53. Tyr-111 serves as a coordination point for substrate.

This sequence belongs to the tRNA pseudouridine synthase TruA family. Homodimer.

The catalysed reaction is uridine(38/39/40) in tRNA = pseudouridine(38/39/40) in tRNA. Its function is as follows. Formation of pseudouridine at positions 38, 39 and 40 in the anticodon stem and loop of transfer RNAs. The sequence is that of tRNA pseudouridine synthase A from Streptococcus pneumoniae (strain 70585).